We begin with the raw amino-acid sequence, 214 residues long: Proteasome subunit beta (214 aa).

Positions 1–11 (MLDTSQEIMKG) are cleaved as a propeptide — removed in mature form; by autocatalysis. The Nucleophile role is filled by threonine 12.

It belongs to the peptidase T1B family. As to quaternary structure, the 20S proteasome core is composed of 14 alpha and 14 beta subunits that assemble into four stacked heptameric rings, resulting in a barrel-shaped structure. The two inner rings, each composed of seven catalytic beta subunits, are sandwiched by two outer rings, each composed of seven alpha subunits. The catalytic chamber with the active sites is on the inside of the barrel. Has a gated structure, the ends of the cylinder being occluded by the N-termini of the alpha-subunits. Is capped at one or both ends by the proteasome regulatory ATPase, PAN.

Its subcellular location is the cytoplasm. The enzyme catalyses Cleavage of peptide bonds with very broad specificity.. With respect to regulation, the formation of the proteasomal ATPase PAN-20S proteasome complex, via the docking of the C-termini of PAN into the intersubunit pockets in the alpha-rings, triggers opening of the gate for substrate entry. Interconversion between the open-gate and close-gate conformations leads to a dynamic regulation of the 20S proteasome proteolysis activity. Functionally, component of the proteasome core, a large protease complex with broad specificity involved in protein degradation. The protein is Proteasome subunit beta of Methanoculleus marisnigri (strain ATCC 35101 / DSM 1498 / JR1).